We begin with the raw amino-acid sequence, 881 residues long: Alanine--tRNA ligase (881 aa).

Zn(2+) contacts are provided by His568, His572, Cys670, and His674.

This sequence belongs to the class-II aminoacyl-tRNA synthetase family. It depends on Zn(2+) as a cofactor.

The protein resides in the cytoplasm. It carries out the reaction tRNA(Ala) + L-alanine + ATP = L-alanyl-tRNA(Ala) + AMP + diphosphate. Catalyzes the attachment of alanine to tRNA(Ala) in a two-step reaction: alanine is first activated by ATP to form Ala-AMP and then transferred to the acceptor end of tRNA(Ala). Also edits incorrectly charged Ser-tRNA(Ala) and Gly-tRNA(Ala) via its editing domain. The polypeptide is Alanine--tRNA ligase (Moorella thermoacetica (strain ATCC 39073 / JCM 9320)).